Here is a 306-residue protein sequence, read N- to C-terminus: MATH domain and coiled-coil domain-containing protein At3g29580 (306 aa).

The region spanning 6-132 (DNKFTWVIKN…NGEIKIVVEF (127 aa)) is the MATH domain. Positions 253-298 (FKLDWLEKKLNEVLEKKEKEESYETRMREIEEEMKDLKAKALDVGA) form a coiled coil.

This chain is MATH domain and coiled-coil domain-containing protein At3g29580, found in Arabidopsis thaliana (Mouse-ear cress).